Consider the following 102-residue polypeptide: Monothiol glutaredoxin-S6 (102 aa).

Residues 1–101 (MESVRSLVED…AMLRRAGAIW (101 aa)) form the Glutaredoxin domain. Position 21 (Cys-21) interacts with [2Fe-2S] cluster.

The protein belongs to the glutaredoxin family. CC-type subfamily.

It is found in the cytoplasm. Its function is as follows. May only reduce GSH-thiol disulfides, but not protein disulfides. The sequence is that of Monothiol glutaredoxin-S6 (GRXS6) from Arabidopsis thaliana (Mouse-ear cress).